The chain runs to 128 residues: Ribonuclease P protein component (128 aa).

Belongs to the RnpA family. As to quaternary structure, consists of a catalytic RNA component (M1 or rnpB) and a protein subunit.

It carries out the reaction Endonucleolytic cleavage of RNA, removing 5'-extranucleotides from tRNA precursor.. Functionally, RNaseP catalyzes the removal of the 5'-leader sequence from pre-tRNA to produce the mature 5'-terminus. It can also cleave other RNA substrates such as 4.5S RNA. The protein component plays an auxiliary but essential role in vivo by binding to the 5'-leader sequence and broadening the substrate specificity of the ribozyme. In Prochlorococcus marinus (strain MIT 9215), this protein is Ribonuclease P protein component.